The primary structure comprises 956 residues: MPDSVRAETGESVAKARVHELAKELGITSKDAVAKLQELGEFVRSASSTIEAPVVKKLRDAFPDAVAAPEAAAPKAPARPAPKAPAKPAEAQASVKPVETQAPATPAAAKAAATPVAPAAPAVKEQKEGSAARPGAGGPRPGNNPFATSQGMPRAGARAEGERPAAAPASGAGRPRPGGPRPGAPRPGNNPFASSQGMPRSGGRGDGERSGGPRPAAGSGGPRPAAGSGGPRPAAGSGGPRPGAGSGASRPGGGGGNRPTPGMMPNRTERPAPAGRGAGGGAGGPGRGGGARPGGGAPAGGGFGKGGRGRGGTQGAFGKGGAGRGKQRKSKRAKRQELEQMSAPSLGGVSVPRGDGNTVVRLRRGSSITDFADKIEANPAALVTVLFHLGEMATATQSLDEETFALLGEELGYKLQVVSPEDEERELLSTFDIDFDAELEAEGDEDLQARPPVVTVMGHVDHGKTRLLDAIRNSDVVAGEHGGITQHIGAYQVNHVHEGEVRKITFIDTPGHEAFTAMRARGAKVTDIAILVVAADDGVMPQTVEALNHAQAAGVPIVVAVNKIDKEGANPEKIRGQLTEYGLVPEEYGGETMFVDVSARQNQNIDALLEAVMLTADAALDLRANPNKDARGIAIEANLDKGRGSVATVLVQSGTLAVGDTIVAGTAHGRVRAMFDDDGTAVTEAGPSRPVQVLGLSSVPRAGDTFFVTGDERTARQIAEKREAADRNAALAKRRKRISLEDFDQAVADGKVDTLNLILKGDVSGAVEALEDSLLKIDVGEGVQLRVIHRGVGAITQNDVNLATVDSAIIIGFNVKPAERVAELADREGVDMRFYSVIYAAIDDIELALKGMLKPEYEEVQLGTAEIREIFRSSKFGNIAGSIVRSGLIRRNAKARVLRAGVLIGDNLTVDSLKRVKDDATEVREGFECGIGLGSFNDLQLEDIIETFEMREKPRV.

The interval 68–357 (APEAAAPKAP…GVSVPRGDGN (290 aa)) is disordered. Low complexity-rich tracts occupy residues 86-123 (AKPA…APAV), 141-156 (PGNN…PRAG), 164-175 (PAAAPASGAGRP), and 212-235 (GPRP…RPAA). Composition is skewed to gly residues over residues 236–257 (GSGG…GGGN) and 276–324 (RGAG…GAGR). Positions 325 to 334 (GKQRKSKRAK) are enriched in basic residues. Residues 449–620 (ARPPVVTVMG…AVMLTADAAL (172 aa)) enclose the tr-type G domain. The interval 458–465 (GHVDHGKT) is G1. A GTP-binding site is contributed by 458 to 465 (GHVDHGKT). The segment at 483-487 (GITQH) is G2. Residues 508–511 (DTPG) are G3. GTP is bound by residues 508–512 (DTPGH) and 562–565 (NKID). Positions 562 to 565 (NKID) are G4. The interval 598–600 (SAR) is G5.

The protein belongs to the TRAFAC class translation factor GTPase superfamily. Classic translation factor GTPase family. IF-2 subfamily.

It is found in the cytoplasm. One of the essential components for the initiation of protein synthesis. Protects formylmethionyl-tRNA from spontaneous hydrolysis and promotes its binding to the 30S ribosomal subunits. Also involved in the hydrolysis of GTP during the formation of the 70S ribosomal complex. This chain is Translation initiation factor IF-2, found in Renibacterium salmoninarum (strain ATCC 33209 / DSM 20767 / JCM 11484 / NBRC 15589 / NCIMB 2235).